A 398-amino-acid chain; its full sequence is cAMP-dependent protein kinase, catalytic subunit-like (398 aa).

Positions 90-344 (LERIITIGKG…TQDVKDHKWF (255 aa)) constitute a Protein kinase domain. Residues 96 to 104 (IGKGTFGRV) and Lys119 contribute to the ATP site. The active-site Proton acceptor is Asp213. The region spanning 345–398 (EKVNWDDTLHLRVEPPIVPTLYHPGDTGNFDDYEEDTTGGPLCSQRDRDLFAEW) is the AGC-kinase C-terminal domain.

The protein belongs to the protein kinase superfamily. Ser/Thr protein kinase family. cAMP subfamily.

The catalysed reaction is L-seryl-[protein] + ATP = O-phospho-L-seryl-[protein] + ADP + H(+). It catalyses the reaction L-threonyl-[protein] + ATP = O-phospho-L-threonyl-[protein] + ADP + H(+). The chain is cAMP-dependent protein kinase, catalytic subunit-like from Caenorhabditis elegans.